The following is a 110-amino-acid chain: MLMLTSQTIDGKRISRYHGIVTGDALIGANIYKDIFSGVRDVVGGRTSAYERELARARELALSSMASAAERLGADAIIGVRLDYHNLGGTMGNTILVSTTGTAVSTEDEE.

The protein belongs to the UPF0145 family.

The chain is UPF0145 protein MTH_507 from Methanothermobacter thermautotrophicus (strain ATCC 29096 / DSM 1053 / JCM 10044 / NBRC 100330 / Delta H) (Methanobacterium thermoautotrophicum).